The following is a 460-amino-acid chain: Argininosuccinate lyase (460 aa).

This sequence belongs to the lyase 1 family. Argininosuccinate lyase subfamily.

Its subcellular location is the cytoplasm. It catalyses the reaction 2-(N(omega)-L-arginino)succinate = fumarate + L-arginine. It functions in the pathway amino-acid biosynthesis; L-arginine biosynthesis; L-arginine from L-ornithine and carbamoyl phosphate: step 3/3. This is Argininosuccinate lyase from Staphylococcus haemolyticus (strain JCSC1435).